Here is a 436-residue protein sequence, read N- to C-terminus: Suppressor of cytokine signaling 4 (436 aa).

Residues 1–25 form a disordered region; the sequence is MAENNSKNVDVRPKTSRSRSADRKD. The span at 9–25 shows a compositional bias: basic and acidic residues; sequence VDVRPKTSRSRSADRKD. The SH2 domain occupies 283–378; it reads CYWGVMDKYA…FFEPLLSTPL (96 aa). Residues 373 to 422 enclose the SOCS box domain; it reads LLSTPLIRTFPFSLQHICRTVICNCTTYDGIDALPIPSPMKLYLKEYHYK.

Its pathway is protein modification; protein ubiquitination. In terms of biological role, SOCS family proteins form part of a classical negative feedback system that regulates cytokine signal transduction. Substrate-recognition component of a SCF-like ECS (Elongin BC-CUL2/5-SOCS-box protein) E3 ubiquitin-protein ligase complex which mediates the ubiquitination and subsequent proteasomal degradation of target proteins. Inhibits EGF signaling by mediating the degradation of the Tyr-phosphorylated EGF receptor/EGFR. The protein is Suppressor of cytokine signaling 4 (Socs4) of Mus musculus (Mouse).